Consider the following 960-residue polypeptide: Endoplasmic reticulum aminopeptidase 2 (960 aa).

At M1–R20 the chain is on the cytoplasmic side. The chain crosses the membrane as a helical; Signal-anchor for type II membrane protein span at residues G21 to V40. The Lumenal portion of the chain corresponds to P41–T960. N85 and N119 each carry an N-linked (GlcNAc...) asparagine glycan. E200 lines the substrate pocket. Residue N219 is glycosylated (N-linked (GlcNAc...) asparagine). Residue G334 to N338 participates in substrate binding. H370 is a binding site for Zn(2+). Residue E371 is the Proton acceptor of the active site. Residues H374 and E393 each contribute to the Zn(2+) site. The N-linked (GlcNAc...) asparagine glycan is linked to N405. C421 and C460 are joined by a disulfide. N650 is a glycosylation site (N-linked (GlcNAc...) asparagine). Cysteines 759 and 766 form a disulfide.

This sequence belongs to the peptidase M1 family. In terms of assembly, heterodimer with ERAP1. Zn(2+) serves as cofactor. N-glycosylated. As to expression, ubiquitously expressed. Highly expressed in spleen and leukocytes.

It is found in the endoplasmic reticulum membrane. Its function is as follows. Aminopeptidase that plays a central role in peptide trimming, a step required for the generation of most HLA class I-binding peptides. Peptide trimming is essential to customize longer precursor peptides to fit them to the correct length required for presentation on MHC class I molecules. Preferentially hydrolyzes the basic residues Arg and Lys. In Homo sapiens (Human), this protein is Endoplasmic reticulum aminopeptidase 2 (ERAP2).